We begin with the raw amino-acid sequence, 247 residues long: uncharacterized protein (247 aa).

It is found in the mitochondrion. This is an uncharacterized protein from Schizosaccharomyces pombe (strain 972 / ATCC 24843) (Fission yeast).